The following is a 29-amino-acid chain: Thrombin-like enzyme collinein-2 (29 aa).

As to quaternary structure, monomer. Expressed by the venom gland.

It is found in the secreted. In terms of biological role, thrombin-like snake venom serine protease. This chain is Thrombin-like enzyme collinein-2, found in Crotalus durissus collilineatus (Brazilian rattlesnake).